A 356-amino-acid chain; its full sequence is V-type proton ATPase subunit d (356 aa).

Belongs to the V-ATPase V0D/AC39 subunit family. As to quaternary structure, V-ATPase is a heteromultimeric enzyme composed of a peripheral catalytic V1 complex (components A to H) attached to an integral membrane V0 proton pore complex (components: a, c, c', c'' and d).

Its function is as follows. Subunit of the integral membrane V0 complex of vacuolar ATPase. Vacuolar ATPase is responsible for acidifying a variety of intracellular compartments in eukaryotic cells, thus providing most of the energy required for transport processes in the vacuolar system. The sequence is that of V-type proton ATPase subunit d (vatD-1) from Dictyostelium discoideum (Social amoeba).